Reading from the N-terminus, the 464-residue chain is GTPase Der (464 aa).

EngA-type G domains are found at residues 3 to 166 (PTIA…AVES) and 177 to 350 (LKMA…QAAT). GTP is bound by residues 9-16 (GRPNVGKS), 56-60 (DTGGI), 118-121 (NKVD), 183-190 (GRPNVGKS), 230-234 (DTAGV), and 295-298 (NKWD). Residues 351 to 435 (EKYSTSFLTR…PVRIEYRSGD (85 aa)) form the KH-like domain.

This sequence belongs to the TRAFAC class TrmE-Era-EngA-EngB-Septin-like GTPase superfamily. EngA (Der) GTPase family. As to quaternary structure, associates with the 50S ribosomal subunit.

Its function is as follows. GTPase that plays an essential role in the late steps of ribosome biogenesis. This chain is GTPase Der, found in Teredinibacter turnerae (strain ATCC 39867 / T7901).